A 233-amino-acid chain; its full sequence is UPF0758 protein SRU_2338 (233 aa).

One can recognise an MPN domain in the interval 110–232 (QVTCPADVAD…HTSLAERGVI (123 aa)). 3 residues coordinate Zn(2+): histidine 181, histidine 183, and aspartate 194. Residues 181 to 194 (HNHPSGNPEPSRED) carry the JAMM motif motif.

This sequence belongs to the UPF0758 family.

The protein is UPF0758 protein SRU_2338 of Salinibacter ruber (strain DSM 13855 / M31).